A 515-amino-acid chain; its full sequence is ATP synthase subunit alpha (515 aa).

171 to 178 (GDRQTGKT) serves as a coordination point for ATP.

It belongs to the ATPase alpha/beta chains family. In terms of assembly, F-type ATPases have 2 components, CF(1) - the catalytic core - and CF(0) - the membrane proton channel. CF(1) has five subunits: alpha(3), beta(3), gamma(1), delta(1), epsilon(1). CF(0) has three main subunits: a(1), b(2) and c(9-12). The alpha and beta chains form an alternating ring which encloses part of the gamma chain. CF(1) is attached to CF(0) by a central stalk formed by the gamma and epsilon chains, while a peripheral stalk is formed by the delta and b chains.

The protein resides in the cell inner membrane. It catalyses the reaction ATP + H2O + 4 H(+)(in) = ADP + phosphate + 5 H(+)(out). Produces ATP from ADP in the presence of a proton gradient across the membrane. The alpha chain is a regulatory subunit. This is ATP synthase subunit alpha from Xylella fastidiosa (strain Temecula1 / ATCC 700964).